Reading from the N-terminus, the 217-residue chain is Uracil-DNA glycosylase (217 aa).

Catalysis depends on D62, which acts as the Proton acceptor.

Belongs to the uracil-DNA glycosylase (UDG) superfamily. UNG family.

Its subcellular location is the cytoplasm. The catalysed reaction is Hydrolyzes single-stranded DNA or mismatched double-stranded DNA and polynucleotides, releasing free uracil.. Excises uracil residues from the DNA which can arise as a result of misincorporation of dUMP residues by DNA polymerase or due to deamination of cytosine. The polypeptide is Uracil-DNA glycosylase (Streptococcus pneumoniae serotype 19F (strain G54)).